Here is a 304-residue protein sequence, read N- to C-terminus: GTPase Era (304 aa).

An Era-type G domain is found at 11 to 179; it reads YCGFIAIVGR…QKIVRKSLRE (169 aa). The interval 19–26 is G1; it reads GRPNVGKS. 19–26 provides a ligand contact to GTP; the sequence is GRPNVGKS. Residues 45 to 49 are G2; that stretch reads QTTRH. The segment at 66–69 is G3; the sequence is DTPG. GTP-binding positions include 66 to 70 and 128 to 131; these read DTPGL and NKVD. Positions 128–131 are G4; that stretch reads NKVD. A G5 region spans residues 158–160; that stretch reads ISA. The 78-residue stretch at 210 to 287 folds into the KH type-2 domain; that stretch reads TGEELPYSVT…HLELWVKVKA (78 aa).

The protein belongs to the TRAFAC class TrmE-Era-EngA-EngB-Septin-like GTPase superfamily. Era GTPase family. Monomer.

Its subcellular location is the cytoplasm. The protein resides in the cell inner membrane. Functionally, an essential GTPase that binds both GDP and GTP, with rapid nucleotide exchange. Plays a role in 16S rRNA processing and 30S ribosomal subunit biogenesis and possibly also in cell cycle regulation and energy metabolism. This chain is GTPase Era, found in Actinobacillus pleuropneumoniae serotype 3 (strain JL03).